A 340-amino-acid chain; its full sequence is L-threonine 3-dehydrogenase (340 aa).

Cys38 is a binding site for Zn(2+). Active-site charge relay system residues include Thr40 and His43. The Zn(2+) site is built by His63, Glu64, Cys93, Cys96, Cys99, and Cys107. Residues Ile175, Asp195, Arg200, 261-263 (LGI), and 285-286 (IY) contribute to the NAD(+) site.

Belongs to the zinc-containing alcohol dehydrogenase family. In terms of assembly, homotetramer. It depends on Zn(2+) as a cofactor.

The protein resides in the cytoplasm. The enzyme catalyses L-threonine + NAD(+) = (2S)-2-amino-3-oxobutanoate + NADH + H(+). It functions in the pathway amino-acid degradation; L-threonine degradation via oxydo-reductase pathway; glycine from L-threonine: step 1/2. In terms of biological role, catalyzes the NAD(+)-dependent oxidation of L-threonine to 2-amino-3-ketobutyrate. This is L-threonine 3-dehydrogenase from Xanthomonas oryzae pv. oryzae (strain MAFF 311018).